The chain runs to 499 residues: MQDQYILALDQGTTSSRAMLFDRLGNIVSTAQKEFQQIYPRPGWVEHDPQEIWSTQAGVAAEAVTRAGMNGTSIAAIGITNQRETTIVWDRETGHPIYNAIVWQDRRTADFCDQLKEQGLEEKVRAKTGLPIDSYFSATKIRWILDNVEGAREKARQGRLAFGTVDSWLVWNFTKGGLHVTDVTNASRTMLFNIHSLKWDDELLEALDIPRSMLPEVRASSEVYGPTKTTVFASKIPLAGIAGDQHAALFGQMCTESGMVKNTYGTGCFLVMNTGDKPIESKNNLVTTIAWQIGDQINYALEGSIFIGGAVVQWLRDGLGIIKNAAEIETLARSVSHSDGVYLVPAFAGLGAPHWNARARGTLFGVTRGTSSAHIARAALDSIAYQSLDVLKAMEADSGIRIGELRVDGGACANNLLMQFQADILGVDAVRPKVAETTALGAAYLAGLAVGYWKDVDELQSQWKLDRRFTPALPHAEVKQCLDGWQRAIRAAKAWADTP.

Residue threonine 13 coordinates ADP. Residues threonine 13, threonine 14, and serine 15 each contribute to the ATP site. Threonine 13 contacts sn-glycerol 3-phosphate. Arginine 17 contacts ADP. Positions 83, 84, 135, and 244 each coordinate sn-glycerol 3-phosphate. Glycerol-binding residues include arginine 83, glutamate 84, tyrosine 135, aspartate 244, and glutamine 245. ADP-binding residues include threonine 266 and glycine 309. ATP-binding residues include threonine 266, glycine 309, glutamine 313, and glycine 410. ADP contacts are provided by glycine 410 and asparagine 414.

The protein belongs to the FGGY kinase family.

The enzyme catalyses glycerol + ATP = sn-glycerol 3-phosphate + ADP + H(+). It participates in polyol metabolism; glycerol degradation via glycerol kinase pathway; sn-glycerol 3-phosphate from glycerol: step 1/1. With respect to regulation, inhibited by fructose 1,6-bisphosphate (FBP). Functionally, key enzyme in the regulation of glycerol uptake and metabolism. Catalyzes the phosphorylation of glycerol to yield sn-glycerol 3-phosphate. The protein is Glycerol kinase of Paraburkholderia phytofirmans (strain DSM 17436 / LMG 22146 / PsJN) (Burkholderia phytofirmans).